The sequence spans 129 residues: MSASLVRATVRAVSKRKLQPTRAALTLTPSAVNKIKQLLKDKPEHVGLKVGVRTRGCNGLSYSLEYTKTKGDSDEEVIQDGVRVFIEKKAQLTLLGTEMDYVEDKLSSEFVFNNPNIKGTCGCGESFHV.

A mitochondrion-targeting transit peptide spans 1–12 (MSASLVRATVRA). Fe cation is bound by residues Cys-57, Cys-121, and Cys-123.

The protein belongs to the HesB/IscA family. In terms of assembly, interacts with CRY2, but not with CRY1 (in vitro).

The protein resides in the mitochondrion. Involved in the maturation of mitochondrial 4Fe-4S proteins functioning late in the iron-sulfur cluster assembly pathway. Probably involved in the binding of an intermediate of Fe/S cluster assembly. This chain is Iron-sulfur cluster assembly 1 homolog, mitochondrial (Isca1), found in Mus musculus (Mouse).